The following is a 178-amino-acid chain: Probable chorismate pyruvate-lyase (178 aa).

3 residues coordinate substrate: Arg-67, Leu-105, and Glu-164.

Belongs to the UbiC family.

The protein localises to the cytoplasm. The enzyme catalyses chorismate = 4-hydroxybenzoate + pyruvate. The protein operates within cofactor biosynthesis; ubiquinone biosynthesis. Its function is as follows. Removes the pyruvyl group from chorismate, with concomitant aromatization of the ring, to provide 4-hydroxybenzoate (4HB) for the ubiquinone pathway. The sequence is that of Probable chorismate pyruvate-lyase from Methylobacillus flagellatus (strain ATCC 51484 / DSM 6875 / VKM B-1610 / KT).